A 152-amino-acid polypeptide reads, in one-letter code: Ribosome maturation factor RimP (152 aa).

It belongs to the RimP family.

The protein resides in the cytoplasm. Required for maturation of 30S ribosomal subunits. This chain is Ribosome maturation factor RimP, found in Teredinibacter turnerae (strain ATCC 39867 / T7901).